A 576-amino-acid polypeptide reads, in one-letter code: Proline--tRNA ligase (576 aa).

It belongs to the class-II aminoacyl-tRNA synthetase family. ProS type 1 subfamily. In terms of assembly, homodimer.

Its subcellular location is the cytoplasm. It catalyses the reaction tRNA(Pro) + L-proline + ATP = L-prolyl-tRNA(Pro) + AMP + diphosphate. Functionally, catalyzes the attachment of proline to tRNA(Pro) in a two-step reaction: proline is first activated by ATP to form Pro-AMP and then transferred to the acceptor end of tRNA(Pro). As ProRS can inadvertently accommodate and process non-cognate amino acids such as alanine and cysteine, to avoid such errors it has two additional distinct editing activities against alanine. One activity is designated as 'pretransfer' editing and involves the tRNA(Pro)-independent hydrolysis of activated Ala-AMP. The other activity is designated 'posttransfer' editing and involves deacylation of mischarged Ala-tRNA(Pro). The misacylated Cys-tRNA(Pro) is not edited by ProRS. This Leptospira borgpetersenii serovar Hardjo-bovis (strain JB197) protein is Proline--tRNA ligase.